Here is a 104-residue protein sequence, read N- to C-terminus: Co-chaperonin GroES 2 (104 aa).

The protein belongs to the GroES chaperonin family. As to quaternary structure, heptamer of 7 subunits arranged in a ring. Interacts with the chaperonin GroEL.

The protein resides in the cytoplasm. Together with the chaperonin GroEL, plays an essential role in assisting protein folding. The GroEL-GroES system forms a nano-cage that allows encapsulation of the non-native substrate proteins and provides a physical environment optimized to promote and accelerate protein folding. GroES binds to the apical surface of the GroEL ring, thereby capping the opening of the GroEL channel. The polypeptide is Co-chaperonin GroES 2 (Mesorhizobium japonicum (strain LMG 29417 / CECT 9101 / MAFF 303099) (Mesorhizobium loti (strain MAFF 303099))).